Here is a 70-residue protein sequence, read N- to C-terminus: ATP synthase subunit c (70 aa).

2 helical membrane-spanning segments follow: residues 4–24 (IAAG…DGIV) and 47–67 (FIGV…SLLV).

It belongs to the ATPase C chain family. F-type ATPases have 2 components, F(1) - the catalytic core - and F(0) - the membrane proton channel. F(1) has five subunits: alpha(3), beta(3), gamma(1), delta(1), epsilon(1). F(0) has three main subunits: a(1), b(2) and c(10-14). The alpha and beta chains form an alternating ring which encloses part of the gamma chain. F(1) is attached to F(0) by a central stalk formed by the gamma and epsilon chains, while a peripheral stalk is formed by the delta and b chains.

It localises to the cell membrane. Its function is as follows. F(1)F(0) ATP synthase produces ATP from ADP in the presence of a proton or sodium gradient. F-type ATPases consist of two structural domains, F(1) containing the extramembraneous catalytic core and F(0) containing the membrane proton channel, linked together by a central stalk and a peripheral stalk. During catalysis, ATP synthesis in the catalytic domain of F(1) is coupled via a rotary mechanism of the central stalk subunits to proton translocation. In terms of biological role, key component of the F(0) channel; it plays a direct role in translocation across the membrane. A homomeric c-ring of between 10-14 subunits forms the central stalk rotor element with the F(1) delta and epsilon subunits. This chain is ATP synthase subunit c, found in Pediococcus pentosaceus (strain ATCC 25745 / CCUG 21536 / LMG 10740 / 183-1w).